Consider the following 543-residue polypeptide: Hydroxylamine reductase (543 aa).

[4Fe-4S] cluster contacts are provided by Cys5, Cys8, Cys17, and Cys23. His236, Glu260, Cys304, Cys398, Cys426, Cys451, Glu486, and Lys488 together coordinate hybrid [4Fe-2O-2S] cluster. A Cysteine persulfide modification is found at Cys398.

It belongs to the HCP family. The cofactor is [4Fe-4S] cluster. Hybrid [4Fe-2O-2S] cluster serves as cofactor.

The protein resides in the cytoplasm. The enzyme catalyses A + NH4(+) + H2O = hydroxylamine + AH2 + H(+). In terms of biological role, catalyzes the reduction of hydroxylamine to form NH(3) and H(2)O. The polypeptide is Hydroxylamine reductase (Bacteroides thetaiotaomicron (strain ATCC 29148 / DSM 2079 / JCM 5827 / CCUG 10774 / NCTC 10582 / VPI-5482 / E50)).